Here is a 191-residue protein sequence, read N- to C-terminus: Molybdenum cofactor guanylyltransferase (191 aa).

Residues 13–15 (LAG), lysine 26, aspartate 72, and aspartate 102 contribute to the GTP site. Residue aspartate 102 participates in Mg(2+) binding.

It belongs to the MobA family. Monomer. It depends on Mg(2+) as a cofactor.

It is found in the cytoplasm. It carries out the reaction Mo-molybdopterin + GTP + H(+) = Mo-molybdopterin guanine dinucleotide + diphosphate. In terms of biological role, transfers a GMP moiety from GTP to Mo-molybdopterin (Mo-MPT) cofactor (Moco or molybdenum cofactor) to form Mo-molybdopterin guanine dinucleotide (Mo-MGD) cofactor. The protein is Molybdenum cofactor guanylyltransferase of Pseudomonas putida (strain ATCC 700007 / DSM 6899 / JCM 31910 / BCRC 17059 / LMG 24140 / F1).